The following is a 695-amino-acid chain: Hypersensitivity response secretion protein HrpI (695 aa).

Helical transmembrane passes span 21–38 (LVGA…ITPL), 45–61 (VLIA…IMLA), 68–92 (LAFS…VSTT), 111–135 (FVVG…FLVI), 203–223 (AIAS…IGVL), 244–262 (GLIA…GMII), and 311–327 (VFIT…LLQL).

This sequence belongs to the FHIPEP (flagella/HR/invasion proteins export pore) family.

It localises to the cell inner membrane. Involved in the secretion of harpin-pss; a proteinaceous elicitor of the hypersensitivity response in plants. In Pseudomonas syringae pv. syringae, this protein is Hypersensitivity response secretion protein HrpI (hrpI).